The sequence spans 215 residues: Redox-sensing transcriptional repressor Rex (215 aa).

The H-T-H motif DNA-binding region spans 18–57 (LYYRFLKNLHASGKQRVSSAELSDAVKVDSATIRRDFSYF). 92–97 (GVGNLG) lines the NAD(+) pocket.

This sequence belongs to the transcriptional regulatory Rex family. As to quaternary structure, homodimer.

It localises to the cytoplasm. Its function is as follows. Modulates transcription in response to changes in cellular NADH/NAD(+) redox state. This is Redox-sensing transcriptional repressor Rex from Bacillus velezensis (strain DSM 23117 / BGSC 10A6 / LMG 26770 / FZB42) (Bacillus amyloliquefaciens subsp. plantarum).